Here is a 746-residue protein sequence, read N- to C-terminus: NAD(P)H-quinone oxidoreductase subunit 5, chloroplastic (746 aa).

The next 16 membrane-spanning stretches (helical) occupy residues tryptophan 9 to phenylalanine 29, tryptophan 40 to isoleucine 60, isoleucine 89 to isoleucine 109, phenylalanine 125 to isoleucine 145, valine 147 to threonine 167, glycine 185 to phenylalanine 205, valine 221 to serine 241, threonine 258 to alanine 278, leucine 280 to isoleucine 300, leucine 327 to isoleucine 347, alanine 354 to serine 374, threonine 396 to serine 416, leucine 425 to tyrosine 445, isoleucine 547 to proline 567, phenylalanine 608 to tyrosine 628, and tyrosine 723 to phenylalanine 743.

It belongs to the complex I subunit 5 family. As to quaternary structure, NDH is composed of at least 16 different subunits, 5 of which are encoded in the nucleus.

It localises to the plastid. Its subcellular location is the chloroplast thylakoid membrane. The enzyme catalyses a plastoquinone + NADH + (n+1) H(+)(in) = a plastoquinol + NAD(+) + n H(+)(out). It carries out the reaction a plastoquinone + NADPH + (n+1) H(+)(in) = a plastoquinol + NADP(+) + n H(+)(out). In terms of biological role, NDH shuttles electrons from NAD(P)H:plastoquinone, via FMN and iron-sulfur (Fe-S) centers, to quinones in the photosynthetic chain and possibly in a chloroplast respiratory chain. The immediate electron acceptor for the enzyme in this species is believed to be plastoquinone. Couples the redox reaction to proton translocation, and thus conserves the redox energy in a proton gradient. The chain is NAD(P)H-quinone oxidoreductase subunit 5, chloroplastic (ndhF) from Lepidium virginicum (Virginia pepperweed).